The sequence spans 481 residues: ATP synthase subunit beta (481 aa).

154 to 161 (GGAGVGKT) is a binding site for ATP.

The protein belongs to the ATPase alpha/beta chains family. In terms of assembly, F-type ATPases have 2 components, CF(1) - the catalytic core - and CF(0) - the membrane proton channel. CF(1) has five subunits: alpha(3), beta(3), gamma(1), delta(1), epsilon(1). CF(0) has three main subunits: a(1), b(2) and c(9-12). The alpha and beta chains form an alternating ring which encloses part of the gamma chain. CF(1) is attached to CF(0) by a central stalk formed by the gamma and epsilon chains, while a peripheral stalk is formed by the delta and b chains.

The protein localises to the cell inner membrane. It carries out the reaction ATP + H2O + 4 H(+)(in) = ADP + phosphate + 5 H(+)(out). Functionally, produces ATP from ADP in the presence of a proton gradient across the membrane. The catalytic sites are hosted primarily by the beta subunits. The protein is ATP synthase subunit beta of Novosphingobium aromaticivorans (strain ATCC 700278 / DSM 12444 / CCUG 56034 / CIP 105152 / NBRC 16084 / F199).